The sequence spans 456 residues: Serine--tRNA ligase (456 aa).

An L-serine-binding site is contributed by 252-254 (TSE). ATP-binding positions include 283–285 (RKE) and Val-299. Glu-306 is an L-serine binding site. Position 370 to 373 (370 to 373 (ELVS)) interacts with ATP. Thr-404 provides a ligand contact to L-serine.

The protein belongs to the class-II aminoacyl-tRNA synthetase family. Type-1 seryl-tRNA synthetase subfamily. As to quaternary structure, homodimer. The tRNA molecule binds across the dimer.

The protein resides in the cytoplasm. It carries out the reaction tRNA(Ser) + L-serine + ATP = L-seryl-tRNA(Ser) + AMP + diphosphate + H(+). The enzyme catalyses tRNA(Sec) + L-serine + ATP = L-seryl-tRNA(Sec) + AMP + diphosphate + H(+). The protein operates within aminoacyl-tRNA biosynthesis; selenocysteinyl-tRNA(Sec) biosynthesis; L-seryl-tRNA(Sec) from L-serine and tRNA(Sec): step 1/1. Its function is as follows. Catalyzes the attachment of serine to tRNA(Ser). Is also able to aminoacylate tRNA(Sec) with serine, to form the misacylated tRNA L-seryl-tRNA(Sec), which will be further converted into selenocysteinyl-tRNA(Sec). The chain is Serine--tRNA ligase from Korarchaeum cryptofilum (strain OPF8).